A 2167-amino-acid chain; its full sequence is Glutamate synthase 1 [NADH], chloroplastic (2167 aa).

Residues 1 to 31 form a disordered region; it reads MSAAQGMAYKLRTDAAPTGAGRRARRSHSSV. A chloroplast-targeting transit peptide spans 1 to 36; sequence MSAAQGMAYKLRTDAAPTGAGRRARRSHSSVAAPYR. Cys-100 functions as the Nucleophile in the catalytic mechanism. One can recognise a Glutamine amidotransferase type-2 domain in the interval 100–504; it reads CGVGFVAELS…PGMMLLVDFE (405 aa). Positions 1022–1042 are disordered; that stretch reads KSNTGEGGEQPSRMEPLANGS. Residue 1192–1249 coordinates FMN; sequence LAETHQTLVANGLRGRAILQTDGQLKTGKDVAVACLLGAEEFGFSTAPLITLGCIMMR. Cys-1245, Cys-1251, and Cys-1256 together coordinate [3Fe-4S] cluster. 1956–1970 provides a ligand contact to NAD(+); it reads GGGDTGTDCIGTSIR.

It belongs to the glutamate synthase family. Monomer. [3Fe-4S] cluster is required as a cofactor. It depends on FAD as a cofactor. The cofactor is FMN. Highly expressed in roots.

It is found in the plastid. The protein localises to the chloroplast. It carries out the reaction 2 L-glutamate + NAD(+) = L-glutamine + 2-oxoglutarate + NADH + H(+). It participates in amino-acid biosynthesis; L-glutamate biosynthesis via GLT pathway; L-glutamate from 2-oxoglutarate and L-glutamine (NAD(+) route): step 1/1. The protein operates within energy metabolism; nitrogen metabolism. Functionally, involved in glutamate biosynthesis and plays a major role in the primary ammonium ions assimilation in seedling roots. May be involved in the reutilization of glutamine in developing organs. Plays a role in the development of tillers. The protein is Glutamate synthase 1 [NADH], chloroplastic of Oryza sativa subsp. japonica (Rice).